We begin with the raw amino-acid sequence, 427 residues long: Methylenetetrahydrofolate--tRNA-(uracil-5-)-methyltransferase TrmFO (427 aa).

6 to 11 contacts FAD; sequence GAGLAG.

It belongs to the MnmG family. TrmFO subfamily. FAD is required as a cofactor.

It is found in the cytoplasm. The catalysed reaction is uridine(54) in tRNA + (6R)-5,10-methylene-5,6,7,8-tetrahydrofolate + NADH + H(+) = 5-methyluridine(54) in tRNA + (6S)-5,6,7,8-tetrahydrofolate + NAD(+). The enzyme catalyses uridine(54) in tRNA + (6R)-5,10-methylene-5,6,7,8-tetrahydrofolate + NADPH + H(+) = 5-methyluridine(54) in tRNA + (6S)-5,6,7,8-tetrahydrofolate + NADP(+). Functionally, catalyzes the folate-dependent formation of 5-methyl-uridine at position 54 (M-5-U54) in all tRNAs. In Acholeplasma laidlawii (strain PG-8A), this protein is Methylenetetrahydrofolate--tRNA-(uracil-5-)-methyltransferase TrmFO.